Here is a 272-residue protein sequence, read N- to C-terminus: Ribosomal RNA small subunit methyltransferase A (272 aa).

Asparagine 18, leucine 20, glycine 45, glutamate 66, aspartate 91, and asparagine 113 together coordinate S-adenosyl-L-methionine.

Belongs to the class I-like SAM-binding methyltransferase superfamily. rRNA adenine N(6)-methyltransferase family. RsmA subfamily.

It is found in the cytoplasm. The enzyme catalyses adenosine(1518)/adenosine(1519) in 16S rRNA + 4 S-adenosyl-L-methionine = N(6)-dimethyladenosine(1518)/N(6)-dimethyladenosine(1519) in 16S rRNA + 4 S-adenosyl-L-homocysteine + 4 H(+). Functionally, specifically dimethylates two adjacent adenosines (A1518 and A1519) in the loop of a conserved hairpin near the 3'-end of 16S rRNA in the 30S particle. May play a critical role in biogenesis of 30S subunits. This Serratia proteamaculans (strain 568) protein is Ribosomal RNA small subunit methyltransferase A.